We begin with the raw amino-acid sequence, 121 residues long: Large ribosomal subunit protein uL14c (121 aa).

This sequence belongs to the universal ribosomal protein uL14 family. In terms of assembly, part of the 50S ribosomal subunit.

Its subcellular location is the plastid. The protein localises to the chloroplast. In terms of biological role, binds to 23S rRNA. The protein is Large ribosomal subunit protein uL14c of Nephroselmis olivacea (Green alga).